The sequence spans 371 residues: Cell division cycle-associated protein 7 (371 aa).

Disordered regions lie at residues 60-110 (TRSQ…EDES) and 140-188 (PGSF…SRIL). Positions 94 to 103 (PSENSVTDSN) are enriched in polar residues. Position 142 is a phosphoserine (Ser-142). The interval 146-170 (RHPLPGSDSQSRRPRRRTFPGVASR) is interaction with MYC. The Nuclear localization signal motif lies at 160 to 176 (RRRTFPGVASRRNPERR). Phosphothreonine is present on Thr-163. A Phosphoserine modification is found at Ser-190. Lys-204 is covalently cross-linked (Glycyl lysine isopeptide (Lys-Gly) (interchain with G-Cter in SUMO2)). Residues 247–371 (EEELENVCSN…SLKQEFEMQA (125 aa)) are mediates transcriptional activity.

As to quaternary structure, interacts with MYC (via C-terminus), YWHAE and YWHAZ. Post-translationally, phosphorylation at Thr-163 promotes interaction with YWHAE and YWHAZ, dissociation from MYC and sequestration in the cytoplasm. In vitro, phosphorylated at Thr-163 by AKT. Ubiquitous with higher level in thymus and small intestine. Overexpressed in a large number of tumors, in blood from patients with acute myelogenous leukemia (AML) and in chronic myelogenous leukemia (CML) blast crisis.

Its subcellular location is the nucleus. It localises to the cytoplasm. Its function is as follows. Participates in MYC-mediated cell transformation and apoptosis; induces anchorage-independent growth and clonogenicity in lymphoblastoid cells. Insufficient to induce tumorigenicity when overexpressed but contributes to MYC-mediated tumorigenesis. May play a role as transcriptional regulator. This chain is Cell division cycle-associated protein 7 (CDCA7), found in Homo sapiens (Human).